The following is a 144-amino-acid chain: Protein archease (144 aa).

Asp-14, Asp-143, and Ile-144 together coordinate Ca(2+).

Belongs to the archease family.

Activates the tRNA-splicing ligase complex by facilitating the enzymatic turnover of catalytic subunit RtcB. Acts by promoting the guanylylation of RtcB, a key intermediate step in tRNA ligation. Can also alter the NTP specificity of RtcB such that ATP, dGTP or ITP is used efficiently. The chain is Protein archease from Aeropyrum pernix (strain ATCC 700893 / DSM 11879 / JCM 9820 / NBRC 100138 / K1).